Consider the following 359-residue polypeptide: UPF0283 membrane protein Rleg2_1967 (359 aa).

A disordered region spans residues 1–43 (MSKPPSDPPRRPPAAFTYEDEATERHDNGRQAERRRKPESFSE). The segment covering 23-40 (TERHDNGRQAERRRKPES) has biased composition (basic and acidic residues). 2 helical membrane-spanning segments follow: residues 77 to 97 (FGKI…GLWT) and 111 to 131 (LGYL…ALVI).

It belongs to the UPF0283 family.

It localises to the cell inner membrane. The chain is UPF0283 membrane protein Rleg2_1967 from Rhizobium leguminosarum bv. trifolii (strain WSM2304).